Consider the following 195-residue polypeptide: Ribonuclease HII (195 aa).

Residues 1 to 195 (MICGIDEAGR…SWRTLRYLNT (195 aa)) form the RNase H type-2 domain. Positions 6, 7, and 101 each coordinate a divalent metal cation.

It belongs to the RNase HII family. Requires Mn(2+) as cofactor. Mg(2+) serves as cofactor.

It localises to the cytoplasm. It carries out the reaction Endonucleolytic cleavage to 5'-phosphomonoester.. In terms of biological role, endonuclease that specifically degrades the RNA of RNA-DNA hybrids. This chain is Ribonuclease HII, found in Pyrobaculum islandicum (strain DSM 4184 / JCM 9189 / GEO3).